The chain runs to 182 residues: UPF0301 protein CHU_1773 (182 aa).

Belongs to the UPF0301 (AlgH) family.

This chain is UPF0301 protein CHU_1773, found in Cytophaga hutchinsonii (strain ATCC 33406 / DSM 1761 / CIP 103989 / NBRC 15051 / NCIMB 9469 / D465).